The sequence spans 181 residues: Protein Syd (181 aa).

Belongs to the Syd family.

The protein resides in the cell inner membrane. Functionally, interacts with the SecY protein in vivo. May bind preferentially to an uncomplexed state of SecY, thus functioning either as a chelating agent for excess SecY in the cell or as a regulatory factor that negatively controls the translocase function. In Enterobacter sp. (strain 638), this protein is Protein Syd.